A 793-amino-acid chain; its full sequence is 3',5'-cyclic-nucleotide phosphodiesterase regA (793 aa).

A disordered region spans residues 1 to 153 (MNNKQEEIDQ…SSHRVSDFSD (153 aa)). 3 stretches are compositionally biased toward low complexity: residues 13 to 34 (SSTS…DSTS), 54 to 69 (NKNN…SNNN), and 80 to 121 (NNSS…NNNN). One can recognise a Response regulatory domain in the interval 161-280 (RILVADDDDV…LLKKKIDTVL (120 aa)). Aspartate 212 carries the post-translational modification 4-aspartylphosphate. Positions 410–733 (RRNSIPTFPQ…ENWQAYMELQ (324 aa)) constitute a PDEase domain. The active-site Proton donor is histidine 487. A divalent metal cation-binding residues include histidine 491, histidine 527, aspartate 528, and aspartate 639. Residues 756–793 (KLPKIDEEENRDKVSSSSSSSTAPLTSTSSSNNETSSS) are disordered. The span at 770–793 (SSSSSSSTAPLTSTSSSNNETSSS) shows a compositional bias: low complexity.

Belongs to the cyclic nucleotide phosphodiesterase family. Requires a divalent metal cation as cofactor. In terms of processing, the phosphorelay mechanism involves the sequential transfer of a phosphate group from Asp-212 of pde2 to 'His-65' of rdeA. Phosphorylation of Asp-212 activates the phosphodiesterase domain.

Its subcellular location is the cytoplasm. The protein localises to the cytosol. It catalyses the reaction 3',5'-cyclic AMP + H2O = AMP + H(+). Its activity is regulated as follows. Inhibited by 3-isobutyl-1-methylxanthine (IBMX). Functionally, phosphodiesterase specific for cAMP. Involved in the degradation of intracellular cAMP. Morphological suppressor of tagB. Phosphorelay protein that accepts phosphate from rdeA or supplies phosphate from regA; depending on the relative concentration of the phosphodonor proteins. This is 3',5'-cyclic-nucleotide phosphodiesterase regA (regA) from Dictyostelium discoideum (Social amoeba).